We begin with the raw amino-acid sequence, 475 residues long: ATP synthase subunit beta (475 aa).

ATP is bound at residue Gly156–Thr163.

It belongs to the ATPase alpha/beta chains family. As to quaternary structure, F-type ATPases have 2 components, CF(1) - the catalytic core - and CF(0) - the membrane proton channel. CF(1) has five subunits: alpha(3), beta(3), gamma(1), delta(1), epsilon(1). CF(0) has three main subunits: a(1), b(2) and c(9-12). The alpha and beta chains form an alternating ring which encloses part of the gamma chain. CF(1) is attached to CF(0) by a central stalk formed by the gamma and epsilon chains, while a peripheral stalk is formed by the delta and b chains.

Its subcellular location is the cell membrane. The catalysed reaction is ATP + H2O + 4 H(+)(in) = ADP + phosphate + 5 H(+)(out). Functionally, produces ATP from ADP in the presence of a proton gradient across the membrane. The catalytic sites are hosted primarily by the beta subunits. The chain is ATP synthase subunit beta from Mycoplasma pneumoniae (strain ATCC 29342 / M129 / Subtype 1) (Mycoplasmoides pneumoniae).